The following is a 682-amino-acid chain: Serine/threonine-protein kinase PLK2 (682 aa).

Residues 25-67 (ACGGDSKKKRPQQPSEDGQPQAQVTPAAPHHHHHHSHSGPEIS) are disordered. A compositionally biased stretch (polar residues) spans 36–48 (QQPSEDGQPQAQV). Residues 79–331 (YCRGKVLGKG…LDDIIRHDFF (253 aa)) enclose the Protein kinase domain. ATP is bound by residues 85–93 (LGKGGFAKC) and lysine 108. Catalysis depends on aspartate 202, which acts as the Proton acceptor. Phosphothreonine is present on threonine 236. The interval 403–432 (SITQQPSKHRADEEPQPPPTTVARSGTSAV) is disordered. POLO box domains are found at residues 500 to 578 (WVTK…YMEE) and 598 to 682 (YLLQ…QRCN).

This sequence belongs to the protein kinase superfamily. Ser/Thr protein kinase family. CDC5/Polo subfamily. Interacts with NSF; causing NSF dissociation from GRIA2. Interacts with CIB1. Catalytic activity is enhanced by phosphorylation of Thr-236. In terms of tissue distribution, brain, lung and heart.

Its subcellular location is the cytoplasm. The protein resides in the cytoskeleton. It is found in the microtubule organizing center. It localises to the centrosome. The protein localises to the centriole. Its subcellular location is the cell projection. The protein resides in the dendrite. The enzyme catalyses L-seryl-[protein] + ATP = O-phospho-L-seryl-[protein] + ADP + H(+). It carries out the reaction L-threonyl-[protein] + ATP = O-phospho-L-threonyl-[protein] + ADP + H(+). Activated by phosphorylation of Thr-236. Once activated, activity is stimulated by binding target proteins. Tumor suppressor serine/threonine-protein kinase involved in synaptic plasticity, centriole duplication and G1/S phase transition. Polo-like kinases act by binding and phosphorylating proteins that are already phosphorylated on a specific motif recognized by the POLO box domains. Phosphorylates CPAP, NPM1, RAPGEF2, RASGRF1, SNCA, SIPA1L1 and SYNGAP1. Plays a key role in synaptic plasticity and memory by regulating the Ras and Rap protein signaling: required for overactivity-dependent spine remodeling by phosphorylating the Ras activator RASGRF1 and the Rap inhibitor SIPA1L1 leading to their degradation by the proteasome. Conversely, phosphorylates the Rap activator RAPGEF2 and the Ras inhibitor SYNGAP1, promoting their activity. Also regulates synaptic plasticity independently of kinase activity, via its interaction with NSF that disrupts the interaction between NSF and the GRIA2 subunit of AMPARs, leading to a rapid rundown of AMPAR-mediated current that occludes long term depression. Required for procentriole formation and centriole duplication by phosphorylating CPAP and NPM1, respectively. Its induction by p53/TP53 suggests that it may participate in the mitotic checkpoint following stress. This chain is Serine/threonine-protein kinase PLK2 (Plk2), found in Mus musculus (Mouse).